A 146-amino-acid chain; its full sequence is Large ribosomal subunit protein uL15 (146 aa).

The interval 1 to 51 (MQLNTLKPAEGSKKNRRRVGRGIGSGLGKTAGRGHKGQKSRSGGFHKVGFE) is disordered. The span at 21–31 (RGIGSGLGKTA) shows a compositional bias: gly residues.

This sequence belongs to the universal ribosomal protein uL15 family. In terms of assembly, part of the 50S ribosomal subunit.

Functionally, binds to the 23S rRNA. This is Large ribosomal subunit protein uL15 from Polynucleobacter asymbioticus (strain DSM 18221 / CIP 109841 / QLW-P1DMWA-1) (Polynucleobacter necessarius subsp. asymbioticus).